A 278-amino-acid polypeptide reads, in one-letter code: Tryptophan synthase alpha chain (278 aa).

Residues Glu61 and Asp72 each act as proton acceptor in the active site.

This sequence belongs to the TrpA family. As to quaternary structure, tetramer of two alpha and two beta chains.

It carries out the reaction (1S,2R)-1-C-(indol-3-yl)glycerol 3-phosphate + L-serine = D-glyceraldehyde 3-phosphate + L-tryptophan + H2O. The protein operates within amino-acid biosynthesis; L-tryptophan biosynthesis; L-tryptophan from chorismate: step 5/5. The alpha subunit is responsible for the aldol cleavage of indoleglycerol phosphate to indole and glyceraldehyde 3-phosphate. The protein is Tryptophan synthase alpha chain of Shewanella oneidensis (strain ATCC 700550 / JCM 31522 / CIP 106686 / LMG 19005 / NCIMB 14063 / MR-1).